We begin with the raw amino-acid sequence, 154 residues long: Transcriptional repressor NrdR (154 aa).

A zinc finger spans residues 3–34; it reads CPFCGAHDTKVIDSRLVAEGDQVRRRRECLAC. In terms of domain architecture, ATP-cone spans 49–139; that stretch reads PRLIKQDGSR…VYRRFQDLNE (91 aa).

It belongs to the NrdR family. The cofactor is Zn(2+).

In terms of biological role, negatively regulates transcription of bacterial ribonucleotide reductase nrd genes and operons by binding to NrdR-boxes. The protein is Transcriptional repressor NrdR of Pseudomonas aeruginosa (strain LESB58).